The chain runs to 108 residues: MEANAAVDGTGNPIPTSAVLTASAKHIGIRCMPENMAFLKCKKNDPNPEKCLEKGRDVTRCVLGLLKDLHQRCPKEMDAYVGCMYYYTNEFELCRKEQEAFEKVCPLK.

CHCH domains follow at residues glycine 28–leucine 69 and histidine 70–lysine 108. Short sequence motifs (cx9C motif) lie at residues cysteine 31–cysteine 41, cysteine 51–cysteine 61, and cysteine 73–cysteine 83. Disulfide bonds link cysteine 31–cysteine 61, cysteine 41–cysteine 51, cysteine 73–cysteine 105, and cysteine 83–cysteine 94. The short motif at cysteine 94–cysteine 105 is the Cx10C motif element.

It belongs to the complex I NDUFA8 subunit family. In terms of assembly, complex I is composed of at least 49 different subunits.

The protein resides in the mitochondrion. It localises to the mitochondrion intermembrane space. In terms of biological role, accessory subunit of the mitochondrial membrane respiratory chain NADH dehydrogenase (Complex I), that is believed not to be involved in catalysis. Complex I functions in the transfer of electrons from NADH to the respiratory chain. The immediate electron acceptor for the enzyme is believed to be ubiquinone. This is NADH dehydrogenase [ubiquinone] 1 alpha subcomplex subunit 8-A from Arabidopsis thaliana (Mouse-ear cress).